The sequence spans 1094 residues: Centrosomal protein of 128 kDa (1094 aa).

The segment at 1–29 (MAESSSESDHFRCRDRLSPWAARSTHRGT) is disordered. Residues 7 to 17 (ESDHFRCRDRL) show a composition bias toward basic and acidic residues. Serine 31 bears the Phosphoserine mark. Residues 115–140 (DGGTGSELHHFPPTSPLKDYGDPQGI) form a disordered region. 2 coiled-coil regions span residues 190 to 827 (SRSD…QESI) and 879 to 959 (EELK…IALE). Residues serine 249, serine 291, and serine 331 each carry the phosphoserine modification. Residues 319 to 345 (AEGDRKGLQHQVSQISKQQSNYQDEQG) form a disordered region. Over residues 328–342 (HQVSQISKQQSNYQD) the composition is skewed to polar residues. Positions 987-999 (DSCSSSERTDGRY) are enriched in basic and acidic residues. The tract at residues 987–1018 (DSCSSSERTDGRYSKYRVRRNSLQHHQDDTKY) is disordered. The segment covering 1000 to 1009 (SKYRVRRNSL) has biased composition (basic residues). Serine 1061 is subject to Phosphoserine. Residues 1067 to 1094 (VAPDSASNKEDATMNGTSSQPKKEEYGS) are disordered.

Its subcellular location is the cytoplasm. It is found in the cytoskeleton. The protein resides in the microtubule organizing center. It localises to the centrosome. The protein localises to the centriole. Its subcellular location is the spindle pole. The protein is Centrosomal protein of 128 kDa (CEP128) of Homo sapiens (Human).